The following is a 354-amino-acid chain: Glycine betaine/proline betaine transport system permease protein ProW (354 aa).

Positions 1–28 (MADQTNPWDTAQVADTTTQTADAWGTPA) are disordered. Topologically, residues 1 to 99 (MADQTNPWDT…VDYILNGFQQ (99 aa)) are cytoplasmic. Positions 9–23 (DTAQVADTTTQTADA) are enriched in low complexity. The helical transmembrane segment at 100-120 (LLLGMPAPVAIILFALIAWQV) threads the bilayer. Residue S121 is a topological domain, periplasmic. A helical transmembrane segment spans residues 122–142 (GVGMGIATLISLIAIGAIGAW). Over 143–148 (SQAMIT) the chain is Cytoplasmic. The region spanning 145–324 (AMITLALVLT…ILAIILDRLT (180 aa)) is the ABC transmembrane type-1 domain. The chain crosses the membrane as a helical span at residues 149-169 (LALVLTALLFCVVIGLPMGIW). Over 170-198 (LARSPRAAKIVRPLLDAMQTTPAFVYLVP) the chain is Periplasmic. The helical transmembrane segment at 199–219 (IVMLFGIGNVPGVVVTIIFAL) threads the bilayer. Over 220-270 (PPIVRLTILGINQVPADLIEASRSFGASPRQMLFKVQLPLAMPTIMAGVNQ) the chain is Cytoplasmic. Residues 271–291 (TLMLALSMVVIASMIAVGGLG) form a helical membrane-spanning segment. Over 292 to 300 (QMVLRGIGR) the chain is Periplasmic. Residues 301–321 (LDMGLATVGGVGIVILAIILD) traverse the membrane as a helical segment. Residues 322–354 (RLTQAVGRDSRSRGNRRWYTTGPVGLITRPFVK) lie on the Cytoplasmic side of the membrane.

Belongs to the binding-protein-dependent transport system permease family. CysTW subfamily. As to quaternary structure, the complex is composed of two ATP-binding proteins (ProV), two transmembrane proteins (ProW) and a solute-binding protein (ProX).

It is found in the cell inner membrane. Part of the ProU ABC transporter complex involved in glycine betaine and proline betaine uptake. Probably responsible for the translocation of the substrate across the membrane. The polypeptide is Glycine betaine/proline betaine transport system permease protein ProW (Salmonella typhimurium (strain LT2 / SGSC1412 / ATCC 700720)).